Here is a 251-residue protein sequence, read N- to C-terminus: Large ribosomal subunit protein uL2 (251 aa).

A compositionally biased stretch (basic residues) spans Met-1–Arg-12. Positions Met-1 to His-22 are disordered.

The protein belongs to the universal ribosomal protein uL2 family. Part of the 50S ribosomal subunit. Forms a bridge to the 30S subunit in the 70S ribosome.

In terms of biological role, one of the primary rRNA binding proteins. Required for association of the 30S and 50S subunits to form the 70S ribosome, for tRNA binding and peptide bond formation. It has been suggested to have peptidyltransferase activity; this is somewhat controversial. Makes several contacts with the 16S rRNA in the 70S ribosome. In Ignicoccus hospitalis (strain KIN4/I / DSM 18386 / JCM 14125), this protein is Large ribosomal subunit protein uL2.